The chain runs to 148 residues: Photosystem II extrinsic protein U, chloroplastic (148 aa).

A chloroplast-targeting transit peptide spans Met-1–Ala-32. The N-terminal 22 residues, Glu-33 to Asn-54, are a transit peptide targeting the thylakoid.

The protein belongs to the PsbU family. In terms of assembly, PSII is composed of 1 copy each of membrane proteins PsbA, PsbB, PsbC, PsbD, PsbE, PsbF, PsbH, PsbI, PsbJ, PsbK, PsbL, PsbM, PsbT, PsbX, PsbY, PsbZ, Psb30/Ycf12, at least 3 peripheral proteins of the oxygen-evolving complex and a large number of cofactors. It forms dimeric complexes. The oxygen-evolving complex may be composed of PsbO, PsbQ', PsbV and PsbU.

Its subcellular location is the plastid. It localises to the chloroplast thylakoid membrane. Its function is as follows. One of the extrinsic, lumenal subunits of photosystem II (PSII), which stabilize and protect the oxygen-evolving complex. PSII is a light-driven water plastoquinone oxidoreductase, using light energy to abstract electrons from H(2)O, generating a proton gradient subsequently used for ATP formation. Stabilizes the structure of photosystem II oxygen-evolving complex (OEC), the ion environment of oxygen evolution and protects the OEC against heat-induced inactivation. The sequence is that of Photosystem II extrinsic protein U, chloroplastic from Phaeodactylum tricornutum (Diatom).